The chain runs to 727 residues: NADH-ubiquinone oxidoreductase 75 kDa subunit, mitochondrial (727 aa).

The transit peptide at 1–23 (MLRIPVRKALVGLSKSPKGCVRT) directs the protein to the mitochondrion. Positions 30–108 (NLIEVFVDGQ…GWNILTNSEK (79 aa)) constitute a 2Fe-2S ferredoxin-type domain. [2Fe-2S] cluster is bound by residues Cys-64, Cys-75, and Cys-78. Lys-84 is modified (N6-acetyllysine). Cys-92 is a [2Fe-2S] cluster binding site. The region spanning 108 to 147 (KSKKAREGVMEFLLANHPLDCPICDQGGECDLQDQSMMFG) is the 4Fe-4S His(Cys)3-ligated-type domain. The [4Fe-4S] cluster site is built by His-124, Cys-128, Cys-131, Cys-137, Cys-176, Cys-179, Cys-182, and Cys-226. The 4Fe-4S Mo/W bis-MGD-type domain maps to 245-301 (TRKTESIDVMDAVGSNIVVSTRTGEVMRILPRMHEDINEXWISDKTRFAYDGLKRQR). 3 positions are modified to N6-acetyllysine: Lys-467, Lys-499, and Lys-709.

It belongs to the complex I 75 kDa subunit family. Core subunit of respiratory chain NADH dehydrogenase (Complex I) which is composed of 45 different subunits. This is the largest subunit of complex I and it is a component of the iron-sulfur (IP) fragment of the enzyme. Complex I associates with ubiquinol-cytochrome reductase complex (Complex III) to form supercomplexes. Interacts with MDM2 and AKAP1. The cofactor is [2Fe-2S] cluster. [4Fe-4S] cluster serves as cofactor.

It is found in the mitochondrion inner membrane. It catalyses the reaction a ubiquinone + NADH + 5 H(+)(in) = a ubiquinol + NAD(+) + 4 H(+)(out). Functionally, core subunit of the mitochondrial membrane respiratory chain NADH dehydrogenase (Complex I) which catalyzes electron transfer from NADH through the respiratory chain, using ubiquinone as an electron acceptor. Essential for catalysing the entry and efficient transfer of electrons within complex I. Plays a key role in the assembly and stability of complex I and participates in the association of complex I with ubiquinol-cytochrome reductase complex (Complex III) to form supercomplexes. The protein is NADH-ubiquinone oxidoreductase 75 kDa subunit, mitochondrial (NDUFS1) of Gorilla gorilla gorilla (Western lowland gorilla).